A 319-amino-acid chain; its full sequence is tRNA U34 carboxymethyltransferase (319 aa).

Carboxy-S-adenosyl-L-methionine-binding positions include lysine 88, tryptophan 102, lysine 107, glycine 126, 176 to 177 (LE), methionine 192, tyrosine 196, and arginine 311.

Belongs to the class I-like SAM-binding methyltransferase superfamily. CmoB family. In terms of assembly, homotetramer.

It carries out the reaction carboxy-S-adenosyl-L-methionine + 5-hydroxyuridine(34) in tRNA = 5-carboxymethoxyuridine(34) in tRNA + S-adenosyl-L-homocysteine + H(+). Functionally, catalyzes carboxymethyl transfer from carboxy-S-adenosyl-L-methionine (Cx-SAM) to 5-hydroxyuridine (ho5U) to form 5-carboxymethoxyuridine (cmo5U) at position 34 in tRNAs. In Pseudomonas savastanoi pv. phaseolicola (strain 1448A / Race 6) (Pseudomonas syringae pv. phaseolicola (strain 1448A / Race 6)), this protein is tRNA U34 carboxymethyltransferase.